The chain runs to 218 residues: Thyroid hormone receptor alpha (218 aa).

Positions 1–215 (PEDIGQSPGV…PPLFLEVFED (215 aa)) constitute an NR LBD domain. 3,3',5-triiodo-L-thyronine is bound by residues Arg36 and Ser85.

This sequence belongs to the nuclear hormone receptor family. NR1 subfamily.

It is found in the nucleus. Functionally, nuclear hormone receptor that can act as a repressor or activator of transcription. High affinity receptor for thyroid hormones, including triiodothyronine and thyroxine. This chain is Thyroid hormone receptor alpha (thra), found in Oncorhynchus mykiss (Rainbow trout).